A 254-amino-acid chain; its full sequence is Translation initiation factor 2 subunit alpha (254 aa).

The 72-residue stretch at 10–81 (GDLVVVKITE…ERKVVDLSLK (72 aa)) folds into the S1 motif domain.

This sequence belongs to the eIF-2-alpha family. In terms of assembly, heterotrimer composed of an alpha, a beta and a gamma chain.

Functionally, eIF-2 functions in the early steps of protein synthesis by forming a ternary complex with GTP and initiator tRNA. The sequence is that of Translation initiation factor 2 subunit alpha from Thermoplasma acidophilum (strain ATCC 25905 / DSM 1728 / JCM 9062 / NBRC 15155 / AMRC-C165).